A 533-amino-acid polypeptide reads, in one-letter code: DNA-directed RNA polymerase III subunit RPC3 (533 aa).

The disordered stretch occupies residues 162–181 (LVPDTDSSDRGPPPPAPTLV). A Phosphoserine modification is found at Ser-194. The disordered stretch occupies residues 197–228 (GKGKRRRSSDEDATGEPKAKKPRYTDNKEPSP). Residues 211–227 (GEPKAKKPRYTDNKEPS) are compositionally biased toward basic and acidic residues.

It belongs to the eukaryotic RPC3/POLR3C RNA polymerase subunit family. Component of the RNA polymerase III complex consisting of 17 subunits: a ten-subunit horseshoe-shaped catalytic core composed of POLR3A/RPC1, POLR3B/RPC2, POLR1C/RPAC1, POLR1D/RPAC2, POLR3K/RPC10, POLR2E/RPABC1, POLR2F/RPABC2, POLR2H/RPABC3, POLR2K/RPABC4 and POLR2L/RPABC5; a mobile stalk composed of two subunits POLR3H/RPC8 and CRCP/RPC9, protruding from the core and functioning primarily in transcription initiation; and additional subunits homologous to general transcription factors of the RNA polymerase II machinery, POLR3C/RPC3-POLR3F/RPC6-POLR3G/RPC7 heterotrimer required for transcription initiation and POLR3D/RPC4-POLR3E/RPC5 heterodimer involved in both transcription initiation and termination. Directly interacts with POLR3G/RPC7 and POLR3GL. Directly interacts with POLR3F/RPC6. Interacts with GTF3C4. As part of the RNA polymerase III complex, interacts with PKP2.

It localises to the nucleus. Functionally, DNA-dependent RNA polymerase catalyzes the transcription of DNA into RNA using the four ribonucleoside triphosphates as substrates. Specific peripheric component of RNA polymerase III (Pol III) which synthesizes small non-coding RNAs including 5S rRNA, snRNAs, tRNAs and miRNAs from at least 500 distinct genomic loci. Part of POLR3C/RPC3-POLR3F/RPC6-POLR3G/RPC7 heterotrimer, coordinates the dynamics of Pol III stalk and clamp modules during the transition from apo to elongation state. Pol III plays a key role in sensing and limiting infection by intracellular bacteria and DNA viruses. Acts as a nuclear and cytosolic DNA sensor involved in innate immune response. Can sense non-self dsDNA that serves as template for transcription into dsRNA. The non-self RNA polymerase III transcripts, such as Epstein-Barr virus-encoded RNAs (EBERs) induce type I interferon and NF-kappa-B through the RIG-I pathway. Preferentially binds single-stranded DNA (ssDNA) in a sequence-independent manner. The protein is DNA-directed RNA polymerase III subunit RPC3 of Mus musculus (Mouse).